Here is a 198-residue protein sequence, read N- to C-terminus: ATP synthase subunit delta (198 aa).

This sequence belongs to the ATPase delta chain family. F-type ATPases have 2 components, F(1) - the catalytic core - and F(0) - the membrane proton channel. F(1) has five subunits: alpha(3), beta(3), gamma(1), delta(1), epsilon(1). F(0) has three main subunits: a(1), b(2) and c(10-14). The alpha and beta chains form an alternating ring which encloses part of the gamma chain. F(1) is attached to F(0) by a central stalk formed by the gamma and epsilon chains, while a peripheral stalk is formed by the delta and b chains.

It is found in the cell inner membrane. F(1)F(0) ATP synthase produces ATP from ADP in the presence of a proton or sodium gradient. F-type ATPases consist of two structural domains, F(1) containing the extramembraneous catalytic core and F(0) containing the membrane proton channel, linked together by a central stalk and a peripheral stalk. During catalysis, ATP synthesis in the catalytic domain of F(1) is coupled via a rotary mechanism of the central stalk subunits to proton translocation. Functionally, this protein is part of the stalk that links CF(0) to CF(1). It either transmits conformational changes from CF(0) to CF(1) or is implicated in proton conduction. This is ATP synthase subunit delta from Gluconacetobacter diazotrophicus (strain ATCC 49037 / DSM 5601 / CCUG 37298 / CIP 103539 / LMG 7603 / PAl5).